The chain runs to 192 residues: Dihydrofolate reductase (192 aa).

Residues 5-191 form the DHFR domain; sequence NVAIIVAALK…FTYNYTLWTR (187 aa). Residues A11 and 18–24 each bind NADP(+); that span reads GIGYKGK. Substrate is bound at residue 32-37; it reads EIRYFK. NADP(+) is bound at residue 56-58; it reads RKT. Residue R72 coordinates substrate. Residue 78-80 coordinates NADP(+); sequence SRS. Substrate contacts are provided by I112 and Y118. 113–120 lines the NADP(+) pocket; the sequence is GGAEIYNE.

This sequence belongs to the dihydrofolate reductase family.

The enzyme catalyses (6S)-5,6,7,8-tetrahydrofolate + NADP(+) = 7,8-dihydrofolate + NADPH + H(+). It functions in the pathway cofactor biosynthesis; tetrahydrofolate biosynthesis; 5,6,7,8-tetrahydrofolate from 7,8-dihydrofolate: step 1/1. Key enzyme in folate metabolism. Catalyzes an essential reaction for de novo glycine and purine synthesis, and for DNA precursor synthesis. The chain is Dihydrofolate reductase (DFR1) from Candida albicans (Yeast).